The sequence spans 308 residues: S-adenosylmethionine-dependent nucleotide dehydratase (308 aa).

The 247-residue stretch at 7 to 253 (SIQELVINFH…WQSYLMINPE (247 aa)) folds into the Radical SAM core domain. Cysteine 21, cysteine 25, and cysteine 28 together coordinate [4Fe-4S] cluster.

This sequence belongs to the radical SAM superfamily. Viperin family. [4Fe-4S] cluster is required as a cofactor.

It catalyses the reaction CTP + AH2 + S-adenosyl-L-methionine = 3'-deoxy-3',4'-didehydro-CTP + 5'-deoxyadenosine + L-methionine + A + H2O + H(+). It carries out the reaction GTP + AH2 + S-adenosyl-L-methionine = 3'-deoxy-3',4'-didehydro-GTP + 5'-deoxyadenosine + L-methionine + A + H2O + H(+). The catalysed reaction is UTP + AH2 + S-adenosyl-L-methionine = 3'-deoxy-3',4'-didehydro-UTP + 5'-deoxyadenosine + L-methionine + A + H2O + H(+). Its function is as follows. Expression of pVip58 in E.coli (strain MG1655) confers resistance to phages lambda, P1 and T7; delays culture collapse upon infection with T7. Catalyzes the conversion of cytidine triphosphate (CTP) to 3'-deoxy-3',4'-didehydro-CTP (ddhCTP), guanosine triphosphate (GTP) to 3'-deoxy-3',4'-didehydro-GTP (ddhGTP) and uridine triphosphate (UTP) to 3'-deoxy-3',4'-didehydro-UTP (ddhUTP), probably via a SAM-dependent radical mechanism. The modified nucleotide represses transcription from T7 RNA polymerase-directed genes (possibly by acting as chain terminators), strongly suggesting these nucleotides block viral polymerase transcription. The chain is S-adenosylmethionine-dependent nucleotide dehydratase from Pseudoalteromonas ulvae.